The chain runs to 340 residues: MILSQRRMLSSKQLIENLIRYKFHKTPYTRSSIWPFKRNSAVIILLFIGMKGELRVLLTKRSRTLRSFSGDVSFPGGKADYFQETFESVARREAEEEIGLPHDPEVLHKEFGMKLDNLVMDMPCYLSRTFLSVKPMVCFLYKDKLEKHEDKYKVPLDIRKFFGKLNPGETSSLFSVPLNDLVIHLLPEADEDVKSYQAEYFERKEYKLNWGGIKWLIMHYHFHVANNNEMPWLQTIEDLSSSDEDGVDGGIFRFRDLWGLTCKILFDVSCIANGLMDEKLKGELGHEDLIVGLHDYGNQMQPNGRSEWEIGMINGDRNLKYSDVIPEYYMKHLLECRSLW.

A peroxisome-targeting transit peptide spans 1 to 7 (MILSQRR). Positions 37 to 199 (KRNSAVIILL…DEDVKSYQAE (163 aa)) constitute a Nudix hydrolase domain. The Nudix box signature appears at 77–99 (GKADYFQETFESVARREAEEEIG). Residues Glu93 and Glu97 each coordinate Mg(2+).

It belongs to the Nudix hydrolase family. PCD1 subfamily. It depends on Mn(2+) as a cofactor. Requires Mg(2+) as cofactor. In terms of processing, the size of the cleaved transit peptide can be of 7 or 8 residues.

The protein resides in the peroxisome. The catalysed reaction is CoA + H2O = (R)-4'-phosphopantetheine + adenosine 3',5'-bisphosphate + 2 H(+). The enzyme catalyses CoA-disulfide + H2O = 4'-phosphopantetheinyl-CoA disulfide + adenosine 3',5'-bisphosphate + 2 H(+). It carries out the reaction 8-oxo-dGTP + H2O = 8-oxo-dGMP + diphosphate + H(+). It catalyses the reaction 2-oxo-dATP + H2O = 2-oxo-dAMP + diphosphate + H(+). Diphosphatase (pyrophosphatase) with specificity for coenzyme A and CoA derivatives. Catalyzes the hydrolysis of the diphosphate linkage in CoA to give 3',5'-ADP and 4'-phosphopantetheine. Prefers oxidized CoA disulfide (CoASSCoA) over CoA as a substrate. May be required to remove potentially toxic oxidized CoA disulfide from peroxisomes to maintain the capacity for beta-oxidation of fatty acids. Can also hydrolyze 8-oxo-dGTP and 2-OH-dATP in vitro; therefore it may function as a sanitizing enzyme for oxidized nucleotides and may contribute to prevention of spontaneous mutagenesis due to the misincorporation of these oxidized nucleotides during DNA synthesis. Shows moderate activity in vitro with several short chain acyl-CoA esters and very low activity on 3'-dephospho-CoA while is not active with (deoxy)nucleoside 5'-triphosphates, nucleoside 5'-di- or monophosphates, diadenosine polyphosphates, nucleoside 5'-diphosphosugars, cytidine 5'-diphosphoalcohols, NAD(+), NADH, or FAD. In Saccharomyces cerevisiae (strain ATCC 204508 / S288c) (Baker's yeast), this protein is Peroxisomal coenzyme A diphosphatase 1, peroxisomal (PCD1).